We begin with the raw amino-acid sequence, 323 residues long: Protein REDOX 2 (323 aa).

Aspartate 53 provides a ligand contact to NADP(+). The active-site Proton donor is tyrosine 58. Residue histidine 121 coordinates substrate. NADP(+) is bound by residues 167-168 (SN), glutamine 189, 215-220 (WSPLLS), and 289-297 (DQIHEIPQR). Positions 302–323 (GEEFMHPEGPIKSPEELWDGDL) are disordered.

Belongs to the aldo/keto reductase family. Monomer. In terms of tissue distribution, expressed in leaf epidermis.

It carries out the reaction 15alpha-stemmadenine + NADP(+) = 17-dehydrostemmadenine + NADPH + 2 H(+). The protein operates within alkaloid biosynthesis. Its function is as follows. Component of iboga and aspidosperma monoterpenoid indole alkaloids (MIAs, e.g. tabersonine and catharanthine) biosynthesis pathway from 19E-geissoschizine. Catalyzes the second oxidation step of the unstable intermediate product resulting from the reaction triggered by the geissoschizine oxidase (GO) in the stemmadenine biosynthesis process from 19E-geissoschizine. In Catharanthus roseus (Madagascar periwinkle), this protein is Protein REDOX 2.